A 504-amino-acid chain; its full sequence is TGF-beta-activated kinase 1 and MAP3K7-binding protein 1 (504 aa).

The disordered stretch occupies residues 1–22 (MAAQRRSLLQSEQQPSWTDDLP). S7 bears the Phosphoserine mark. Positions 7-17 (SLLQSEQQPSW) are enriched in polar residues. The 338-residue stretch at 28–365 (GVGSASNRSY…EDMTLLVRNF (338 aa)) folds into the PPM-type phosphatase domain. Residue S378 is modified to Phosphoserine. S395 carries O-linked (GlcNAc) serine glycosylation. Residue S423 is modified to Phosphoserine; by MAPK14. Positions 430–439 (ATPTLTNQSP) are enriched in polar residues. The tract at residues 430 to 478 (ATPTLTNQSPTLTLQSTNTHTQSSSSSSDGGLFRSRPAHSLPPGEDGRV) is disordered. T431 carries the phosphothreonine; by MAPK14 modification. At S438 the chain carries Phosphoserine; by MAPK14. A compositionally biased stretch (low complexity) spans 440-457 (TLTLQSTNTHTQSSSSSS). A Phosphothreonine modification is found at T442.

In terms of assembly, interacts with XIAP and BIRC7. Interacts with TRAF6 and MAP3K7; during IL-1 signaling. Identified in the TRIKA2 complex composed of MAP3K7, TAB1 and TAB2. Interacts with TRAF6 and MAPK14; these interactions allow MAPK14 autophosphorylation. Interacts with STING1; interaction takes place following cGAMP activation and promotes TAB1 recruitment to the endoplasmic reticulum, triggering MAP3K7/TAK1 activation and STING1 phosphorylation. Phosphorylated at all three sites Ser-423, Thr-431 and Ser-438 by MAPK14 when cells were exposed to cellular stresses, or stimulated with TNF-alpha, IL1 or LPS. These phosphorylations inhibit TAK1 activation by a feedback control mechanism. Dephosphorylated by DUSP14 at Ser-438, leading to TAB1-MAP3K7/TAK1 complex inactivation in T-cells. In terms of processing, ubiquitinated by MAP3K1 with 'Lys-63'-linked polyubiquitin; leading to activation of TAK1 and of JNK and p38 MAP kinases following EGF and TGF-beta stimulation. Ubiquitinated by ITCH with 'Lys-48'-linked polyubiquitin; leading to proteasomal degradation. Ubiquitinated by RNF114 during maternal-to-zygotic transition; leading to degradation. Post-translationally, (Microbial infection) Deubiquitinated by Y.enterocolitica YopP. O-GlcNAcylated at Ser-395 by OGT is required for full MAP3K7/TAK1 activation upon stimulation with IL-1 or osmotic stress. Deglycosylated at Ser-395 by OGA. Ubiquitous.

The protein resides in the cytoplasm. It is found in the cytosol. It localises to the endoplasmic reticulum membrane. Its function is as follows. Key adapter protein that plays an essential role in JNK and NF-kappa-B activation and proinflammatory cytokines production in response to stimulation with TLRs and cytokines. Mechanistically, associates with the catalytic domain of MAP3K7/TAK1 to trigger MAP3K7/TAK1 autophosphorylation leading to its full activation. Similarly, associates with MAPK14 and triggers its autophosphorylation and subsequent activation. In turn, MAPK14 phosphorylates TAB1 and inhibits MAP3K7/TAK1 activation in a feedback control mechanism. Also plays a role in recruiting MAPK14 to the TAK1 complex for the phosphorylation of the TAB2 and TAB3 regulatory subunits. This is TGF-beta-activated kinase 1 and MAP3K7-binding protein 1 (TAB1) from Homo sapiens (Human).